We begin with the raw amino-acid sequence, 617 residues long: Leucine aminopeptidase 2 (617 aa).

A peptide is bound by residues 139–141 and 271–276; these read QCQ and PYGGME. H300 is a binding site for Zn(2+). E301 (proton acceptor) is an active-site residue. Residues H304 and E323 each coordinate Zn(2+). The active-site Proton donor is Y388.

It belongs to the peptidase M1 family. It depends on Zn(2+) as a cofactor.

It localises to the cytoplasm. The protein resides in the nucleus. The catalysed reaction is an epoxide + H2O = an ethanediol. Its function is as follows. Aminopeptidase that preferentially cleaves di- and tripeptides. Also has low epoxide hydrolase activity (in vitro). Can hydrolyze the epoxide leukotriene LTA(4) but it forms preferentially 5,6-dihydroxy-7,9,11,14-eicosatetraenoic acid rather than the cytokine leukotriene B(4) as the product compared to the homologous mammalian enzyme (in vitro). This is Leucine aminopeptidase 2 from Neosartorya fischeri (strain ATCC 1020 / DSM 3700 / CBS 544.65 / FGSC A1164 / JCM 1740 / NRRL 181 / WB 181) (Aspergillus fischerianus).